The following is a 201-amino-acid chain: Imidazole glycerol phosphate synthase subunit HisH (201 aa).

Positions 1–201 constitute a Glutamine amidotransferase type-1 domain; the sequence is MVFIADYGAG…LQVLKNFAEF (201 aa). The active-site Nucleophile is the Cys79. Residues His183 and Glu185 contribute to the active site.

Heterodimer of HisH and HisF.

It is found in the cytoplasm. It carries out the reaction 5-[(5-phospho-1-deoxy-D-ribulos-1-ylimino)methylamino]-1-(5-phospho-beta-D-ribosyl)imidazole-4-carboxamide + L-glutamine = D-erythro-1-(imidazol-4-yl)glycerol 3-phosphate + 5-amino-1-(5-phospho-beta-D-ribosyl)imidazole-4-carboxamide + L-glutamate + H(+). It catalyses the reaction L-glutamine + H2O = L-glutamate + NH4(+). It functions in the pathway amino-acid biosynthesis; L-histidine biosynthesis; L-histidine from 5-phospho-alpha-D-ribose 1-diphosphate: step 5/9. Its function is as follows. IGPS catalyzes the conversion of PRFAR and glutamine to IGP, AICAR and glutamate. The HisH subunit catalyzes the hydrolysis of glutamine to glutamate and ammonia as part of the synthesis of IGP and AICAR. The resulting ammonia molecule is channeled to the active site of HisF. The chain is Imidazole glycerol phosphate synthase subunit HisH from Chlorobaculum tepidum (strain ATCC 49652 / DSM 12025 / NBRC 103806 / TLS) (Chlorobium tepidum).